Reading from the N-terminus, the 484-residue chain is Palmitoyltransferase ZDHHC1 (484 aa).

2 stretches are compositionally biased toward polar residues: residues 1-11 and 19-34; these read MNICNKPSNKT and TAPSQDSGPSPELQGQ. The segment at 1-38 is disordered; it reads MNICNKPSNKTAPEKSVWTAPSQDSGPSPELQGQRSRR. Over 1-49 the chain is Cytoplasmic; it reads MNICNKPSNKTAPEKSVWTAPSQDSGPSPELQGQRSRRNGWSWPPHPLQ. The interval 1–268 is mediates interaction with STING1; it reads MNICNKPSNK…GHLLCFHIYL (268 aa). Residues 50 to 70 form a helical membrane-spanning segment; the sequence is IVAWLLYLFFAVIGFGVLVPL. Topologically, residues 71 to 74 are lumenal; sequence LPHH. The chain crosses the membrane as a helical span at residues 75–95; it reads WVPAGYACMGAIFAGHLVVHL. Topologically, residues 96–182 are cytoplasmic; it reads TAVSIDPADA…YRLFLHSVAS (87 aa). One can recognise a DHHC domain in the interval 131–181; sequence LHCNLCDVDVSARSKHCSACNKCVCGFDHHCKWLNNCVGERNYRLFLHSVA. C161 acts as the S-palmitoyl cysteine intermediate in catalysis. A helical membrane pass occupies residues 183–203; the sequence is ALLGVLLLVLVATYVFVEFFV. The Lumenal portion of the chain corresponds to 204-238; it reads NPMRLRTNQHFEVLKNHTDVWFVFLPAAPVETQAP. Residues 239 to 259 traverse the membrane as a helical segment; it reads AILALAALLILLGLLSTALLG. The Cytoplasmic segment spans residues 260–484; it reads HLLCFHIYLM…GTPGGGDGLP (225 aa). Disordered stretches follow at residues 341-415 and 444-484; these read TQGQ…VHAG and LGAP…DGLP. The segment covering 364-374 has biased composition (basic residues); sequence PQKKRKRRVYR. Over residues 380-392 the composition is skewed to basic and acidic residues; sequence VLDRELPLPRLRE. A compositionally biased stretch (low complexity) spans 395–415; it reads TPSRRSSSSSDSTSASPVHAG. Residues 475 to 484 are compositionally biased toward gly residues; it reads GTPGGGDGLP.

Belongs to the DHHC palmitoyltransferase family. As to quaternary structure, interacts with STING1; ZDHHC1 constitutively interacts with STING1 and in presence of DNA viruses activates it by promoting its cGAMP-induced oligomerization and the recruitment of downstream signaling components. In terms of tissue distribution, expressed at high levels in fetal lung and heart. Expressed at lower levels in fetal liver and brain. Also detected in adult islet cells of pancreas, Leydig cells of testis, retina and molecular layer of cerebellum.

The protein resides in the endosome membrane. It localises to the endoplasmic reticulum membrane. The protein localises to the golgi apparatus. The enzyme catalyses L-cysteinyl-[protein] + hexadecanoyl-CoA = S-hexadecanoyl-L-cysteinyl-[protein] + CoA. Functionally, palmitoyltransferase that catalyzes the addition of palmitate onto various protein substrates, such as NCDN and NLRP3. Has a palmitoyltransferase activity toward NCDN and regulates NCDN association with endosome membranes through this palmitoylation. Acts as an activator of the NLRP3 inflammasome by mediating palmitoylation of 'Cys-130' and 'Cys-958' of NLRP3, thereby promoting NLRP3 phosphorylation and activation by NEK7. Also has a palmitoyltransferase activity-independent function in DNA virus-triggered and CGAS-mediated innate immune response. Functions as an activator of STING1 by promoting its cGAMP-induced oligomerization and the recruitment of downstream signaling components. This is Palmitoyltransferase ZDHHC1 from Mus musculus (Mouse).